The primary structure comprises 92 residues: DNA-directed RNA polymerase subunit Rpo11 (92 aa).

Belongs to the archaeal Rpo11/eukaryotic RPB11/RPC19 RNA polymerase subunit family. In terms of assembly, part of the RNA polymerase complex.

The protein localises to the cytoplasm. It catalyses the reaction RNA(n) + a ribonucleoside 5'-triphosphate = RNA(n+1) + diphosphate. Functionally, DNA-dependent RNA polymerase (RNAP) catalyzes the transcription of DNA into RNA using the four ribonucleoside triphosphates as substrates. This is DNA-directed RNA polymerase subunit Rpo11 from Halorubrum lacusprofundi (strain ATCC 49239 / DSM 5036 / JCM 8891 / ACAM 34).